The following is a 614-amino-acid chain: Putative ankyrin repeat protein RBE_0997 (614 aa).

ANK repeat units follow at residues 3 to 32 (KDEELLIEAIENDDLKEVQKLLQEGVDPNI), 36 to 65 (DDKPCILSAIRNKNLDIVSVLLENGANPNA), 69 to 98 (DGEPIISAAIRTKRLDIINILLENRADPNL), 102 to 131 (RKNTILLKAIQSNNLDIVNAFLNKGANLNA), 135 to 164 (SGYPIFLKAIKSENLEIINALLEKGANPNL), 168 to 197 (DGSPLLFTAINTKNLDIIDALIKMGANVEA), 201 to 231 (DGNTVLNVLLERRGNVNIISLLIENSQDKEK), 239 to 268 (NGETFLHLAAQQGNSKIFDKYLDYYPTVNI), and 272 to 301 (AGYTPLYWSKLLGHTEISNKLIERAEELKE). Positions 348–580 (NVEDIDYRKI…VQSAETFMNK (233 aa)) constitute a Glutamine amidotransferase type-1 domain. Cysteine 444 (nucleophile) is an active-site residue. Residues histidine 547 and glutamate 549 contribute to the active site.

This chain is Putative ankyrin repeat protein RBE_0997, found in Rickettsia bellii (strain RML369-C).